The chain runs to 372 residues: Transcription factor YY2 (372 aa).

Residues 32–102 (MEDIPTESVQ…SDNQLGNDLE (71 aa)) form a mediates transcriptional activation region. Over residues 126–136 (SAASTSTSTQS) the composition is skewed to low complexity. Disordered regions lie at residues 126–172 (SAAS…WEQK) and 186–210 (TMWS…PPDY). Basic residues predominate over residues 137–146 (RSKKPSKKPS). Polar residues-rich tracts occupy residues 154–165 (EANPAGSSSSLG) and 186–196 (TMWSPNDNNDQ). A mediates transcriptional repression region spans residues 237–372 (EFTKVKPKRS…LTHVKTKNNP (136 aa)). C2H2-type zinc fingers lie at residues 254 to 278 (VPCS…LHIH), 283 to 305 (HVCA…QLVH), 311 to 335 (FQCT…LRIH), and 341 to 365 (FVCP…ILTH).

This sequence belongs to the YY transcription factor family. As to expression, expressed in kidney, liver, spleen and testis but not in colon.

It is found in the nucleus. Functionally, functions as a multifunctional transcription factor that may exhibit positive and negative control on a large number of genes. May antagonize YY1 and function in development and differentiation. This Homo sapiens (Human) protein is Transcription factor YY2 (YY2).